The following is a 122-amino-acid chain: Large ribosomal subunit protein uL14c (122 aa).

Belongs to the universal ribosomal protein uL14 family. As to quaternary structure, part of the 50S ribosomal subunit.

It localises to the plastid. It is found in the chloroplast. Functionally, binds to 23S rRNA. The protein is Large ribosomal subunit protein uL14c of Citrus sinensis (Sweet orange).